Here is a 451-residue protein sequence, read N- to C-terminus: Tubulin beta-1 chain (451 aa).

Q11, E73, S142, G146, T147, G148, N208, and N230 together coordinate GTP. Residue E73 coordinates Mg(2+). A disordered region spans residues 430–451 (QEATADDEAEFEEEGEVEGEYA). Over residues 433 to 451 (TADDEAEFEEEGEVEGEYA) the composition is skewed to acidic residues.

This sequence belongs to the tubulin family. As to quaternary structure, dimer of alpha and beta chains. A typical microtubule is a hollow water-filled tube with an outer diameter of 25 nm and an inner diameter of 15 nM. Alpha-beta heterodimers associate head-to-tail to form protofilaments running lengthwise along the microtubule wall with the beta-tubulin subunit facing the microtubule plus end conferring a structural polarity. Microtubules usually have 13 protofilaments but different protofilament numbers can be found in some organisms and specialized cells. It depends on Mg(2+) as a cofactor.

It localises to the cytoplasm. It is found in the cytoskeleton. Its function is as follows. Tubulin is the major constituent of microtubules, a cylinder consisting of laterally associated linear protofilaments composed of alpha- and beta-tubulin heterodimers. Microtubules grow by the addition of GTP-tubulin dimers to the microtubule end, where a stabilizing cap forms. Below the cap, tubulin dimers are in GDP-bound state, owing to GTPase activity of alpha-tubulin. The sequence is that of Tubulin beta-1 chain from Homarus americanus (American lobster).